We begin with the raw amino-acid sequence, 432 residues long: Tol-Pal system protein TolB (432 aa).

Positions 1 to 22 (MMFKKCLSVLFTCLIFISSARA) are cleaved as a signal peptide.

This sequence belongs to the TolB family. In terms of assembly, the Tol-Pal system is composed of five core proteins: the inner membrane proteins TolA, TolQ and TolR, the periplasmic protein TolB and the outer membrane protein Pal. They form a network linking the inner and outer membranes and the peptidoglycan layer.

The protein resides in the periplasm. Functionally, part of the Tol-Pal system, which plays a role in outer membrane invagination during cell division and is important for maintaining outer membrane integrity. The protein is Tol-Pal system protein TolB of Marinomonas sp. (strain MWYL1).